We begin with the raw amino-acid sequence, 893 residues long: UPF0182 protein CLB_0018 (893 aa).

The next 7 helical transmembrane spans lie at 9–29, 49–69, 94–114, 154–174, 202–222, 246–266, and 273–293; these read IPLF…NFII, AIII…WMYY, LFFI…SSSY, VIIS…FILE, LAIV…IKIW, FYKI…LSIV, and VSIC…ASFL.

It belongs to the UPF0182 family.

Its subcellular location is the cell membrane. This chain is UPF0182 protein CLB_0018, found in Clostridium botulinum (strain ATCC 19397 / Type A).